The primary structure comprises 396 residues: Chalcone synthase B (396 aa).

Cys170 is an active-site residue.

This sequence belongs to the thiolase-like superfamily. Chalcone/stilbene synthases family.

The catalysed reaction is (E)-4-coumaroyl-CoA + 3 malonyl-CoA + 3 H(+) = 2',4,4',6'-tetrahydroxychalcone + 3 CO2 + 4 CoA. It functions in the pathway secondary metabolite biosynthesis; flavonoid biosynthesis. The primary product of this enzyme is 4,2',4',6'-tetrahydroxychalcone (also termed naringenin-chalcone or chalcone) which can under specific conditions spontaneously isomerize into naringenin. This Ipomoea purpurea (Common morning glory) protein is Chalcone synthase B (CHSB).